Here is a 482-residue protein sequence, read N- to C-terminus: PHD finger protein At3g20280 (482 aa).

A PHD-type zinc finger spans residues 45–97 (AMACQICEVTINEMDTLLICDACEKAYHLKCLQGNNMKGVPKSEWHCSRCVQA). Disordered regions lie at residues 188–210 (TNIGSQGSKENVACGANSPAPVS) and 314–482 (SSNS…ENAA). Residues 314-324 (SSNSQQAVSHS) show a composition bias toward low complexity. 2 stretches are compositionally biased toward polar residues: residues 377 to 386 (ACQNHPTASP) and 393 to 428 (QDSTITAAPSVTQEDSAFNTEKTPPQPLSVSSNYDS). The span at 447 to 482 (DSEKGKGLNGLDDRHQEQPSEPEFYKSDSVKEENAA) shows a compositional bias: basic and acidic residues.

The sequence is that of PHD finger protein At3g20280 from Arabidopsis thaliana (Mouse-ear cress).